Consider the following 74-residue polypeptide: U3-agatoxin-Ao1h (74 aa).

A signal peptide spans M1–A20. The propeptide occupies V21 to R34. 4 disulfides stabilise this stretch: C37–C53, C44–C58, C52–C68, and C60–C66. Asparagine amide is present on N72.

Belongs to the neurotoxin 07 (Beta/delta-agtx) family. 03 (aga-4) subfamily. Aga sub-subfamily. As to expression, expressed by the venom gland.

It is found in the secreted. Functionally, insecticidal neurotoxin that induces an irreversible spastic paralysis when injected into insects. Modifies presynaptic voltage-gated sodium channels (Nav), causing them to open at the normal resting potential of the nerve. This leads to spontaneous release of neurotransmitter and repetitive action potentials in motor neurons. The polypeptide is U3-agatoxin-Ao1h (Agelena orientalis (Funnel-web spider)).